Reading from the N-terminus, the 97-residue chain is Aspartyl/glutamyl-tRNA(Asn/Gln) amidotransferase subunit C (97 aa).

Belongs to the GatC family. Heterotrimer of A, B and C subunits.

The catalysed reaction is L-glutamyl-tRNA(Gln) + L-glutamine + ATP + H2O = L-glutaminyl-tRNA(Gln) + L-glutamate + ADP + phosphate + H(+). It catalyses the reaction L-aspartyl-tRNA(Asn) + L-glutamine + ATP + H2O = L-asparaginyl-tRNA(Asn) + L-glutamate + ADP + phosphate + 2 H(+). Functionally, allows the formation of correctly charged Asn-tRNA(Asn) or Gln-tRNA(Gln) through the transamidation of misacylated Asp-tRNA(Asn) or Glu-tRNA(Gln) in organisms which lack either or both of asparaginyl-tRNA or glutaminyl-tRNA synthetases. The reaction takes place in the presence of glutamine and ATP through an activated phospho-Asp-tRNA(Asn) or phospho-Glu-tRNA(Gln). The chain is Aspartyl/glutamyl-tRNA(Asn/Gln) amidotransferase subunit C from Anaeromyxobacter dehalogenans (strain 2CP-C).